The chain runs to 839 residues: Putative AC9 transposase (839 aa).

Polar residues predominate over residues 32-43 (SSSNANGTATDP). Residues 32–85 (SSSNANGTATDPSQDDMAIVHEPQPQPQPQPEPQPQPQPEPEEEAPQKRAKKCT) are disordered. Residues 55–70 (QPQPQPQPEPQPQPQP) show a composition bias toward pro residues.

This Zea mays (Maize) protein is Putative AC9 transposase.